We begin with the raw amino-acid sequence, 482 residues long: UDP-N-acetylmuramate--L-alanine ligase (482 aa).

123 to 129 contacts ATP; that stretch reads GTHGKTT.

It belongs to the MurCDEF family.

The protein resides in the cytoplasm. It carries out the reaction UDP-N-acetyl-alpha-D-muramate + L-alanine + ATP = UDP-N-acetyl-alpha-D-muramoyl-L-alanine + ADP + phosphate + H(+). It participates in cell wall biogenesis; peptidoglycan biosynthesis. Functionally, cell wall formation. This chain is UDP-N-acetylmuramate--L-alanine ligase, found in Pseudomonas putida (strain ATCC 700007 / DSM 6899 / JCM 31910 / BCRC 17059 / LMG 24140 / F1).